The sequence spans 244 residues: Pyridoxine 5'-phosphate synthase (244 aa).

Asn-9 lines the 3-amino-2-oxopropyl phosphate pocket. 11 to 12 contacts 1-deoxy-D-xylulose 5-phosphate; it reads DH. A 3-amino-2-oxopropyl phosphate-binding site is contributed by Arg-20. The active-site Proton acceptor is the His-45. 1-deoxy-D-xylulose 5-phosphate contacts are provided by Arg-47 and His-52. Glu-72 acts as the Proton acceptor in catalysis. Thr-102 contacts 1-deoxy-D-xylulose 5-phosphate. His-193 (proton donor) is an active-site residue. Residues Gly-194 and 215–216 each bind 3-amino-2-oxopropyl phosphate; that span reads GH.

Belongs to the PNP synthase family. In terms of assembly, homooctamer; tetramer of dimers.

The protein resides in the cytoplasm. The enzyme catalyses 3-amino-2-oxopropyl phosphate + 1-deoxy-D-xylulose 5-phosphate = pyridoxine 5'-phosphate + phosphate + 2 H2O + H(+). The protein operates within cofactor biosynthesis; pyridoxine 5'-phosphate biosynthesis; pyridoxine 5'-phosphate from D-erythrose 4-phosphate: step 5/5. In terms of biological role, catalyzes the complicated ring closure reaction between the two acyclic compounds 1-deoxy-D-xylulose-5-phosphate (DXP) and 3-amino-2-oxopropyl phosphate (1-amino-acetone-3-phosphate or AAP) to form pyridoxine 5'-phosphate (PNP) and inorganic phosphate. This chain is Pyridoxine 5'-phosphate synthase, found in Blochmanniella pennsylvanica (strain BPEN).